A 191-amino-acid chain; its full sequence is Protein phosphatase inhibitor 2 (191 aa).

Residues 20-31 (ESNKPVRQKITE) are compositionally biased toward basic and acidic residues. 2 disordered regions span residues 20–52 (ESNK…RGRA) and 67–191 (RNVL…PELI). 2 positions are modified to phosphoserine: S45 and S47. Positions 93-109 (SDEEEEEADPMDQDEEG) are enriched in acidic residues. Over residues 114-136 (KNERFNAHRKAHYDEFRKVKELR) the composition is skewed to basic and acidic residues.

Interacts with protein phosphatase 1. Interacts with TOPP1, SRK2D/SNRK2.2, SRK2I/SNRK2.3, SRK2E/SNRK2.6, SRK2C/SNRK2.8 and PYL11. Post-translationally, phosphorylated in vivo. In terms of tissue distribution, expressed in roots, cotyledons, leaves, flowers and siliques.

The protein resides in the nucleus. It localises to the cytoplasm. Functionally, inhibitor of protein-phosphatase 1 (PP1). Binds to and inhibits PP1 activity. Acts as negative regulator of abscisic acid (ABA) signaling. Enhances the inhibition of SRK2E/SNRK2.6 by TOPP1. May promote the interaction between TOPP1 and the ABA receptor PYL11. This is Protein phosphatase inhibitor 2 from Arabidopsis thaliana (Mouse-ear cress).